The sequence spans 224 residues: uncharacterized protein (224 aa).

The next 6 membrane-spanning stretches (helical) occupy residues Met-25 to Phe-45, Ile-54 to Ile-74, Ile-91 to Phe-111, Phe-119 to Leu-139, Ile-142 to Ile-162, and His-174 to Phe-194.

The protein localises to the cell membrane. This is an uncharacterized protein from Mycoplasma genitalium (strain ATCC 33530 / DSM 19775 / NCTC 10195 / G37) (Mycoplasmoides genitalium).